The chain runs to 152 residues: Large ribosomal subunit protein bL9 (152 aa).

Belongs to the bacterial ribosomal protein bL9 family.

In terms of biological role, binds to the 23S rRNA. In Synechocystis sp. (strain ATCC 27184 / PCC 6803 / Kazusa), this protein is Large ribosomal subunit protein bL9.